The primary structure comprises 432 residues: MPNVVVVGAQWGDEGKGKIVDLLTQYADVVVRFQGGNNAGHTLVVGGEKTVLHLIPSGILHPGKSCVIGNGVVIDPEVLVLEIDRLKAKGALKDDGQLVVSLDAHVIMPWHKAIDVAREQAMGEGKIGTTGRGIGPTYEDKVARRGLRIRDLLDEARLARKVKERAALAREELARLGAKLELDEPALVKRYAELGRRVAGYATDVSIWLHRALQQGKSLLFEGAQGTMLDVDHGTYPFVTSSNTVAGNAVVGCGLGPTAVDYVLGISKAYSTRVGGGPYPTELKDETGERLRKIGGEYGATTGRPRRTGWLDALALRYAVRVNGLSGIAMTKLDVLTGFDTVKIAVGYRLDGKVLDEMPSDPEVIERCTPVYEELPGWTEKLEHLRTWDDLPPRARAYVKRVEELAGVKVVGCSVGADRGETILVENPFLAR.

GTP contacts are provided by residues 12–18 and 40–42; these read GDEGKGK and GHT. D13 serves as the catalytic Proton acceptor. The Mg(2+) site is built by D13 and G40. IMP contacts are provided by residues 13–16, 38–41, T130, R144, Q225, T240, and R304; these read DEGK and NAGH. H41 serves as the catalytic Proton donor. 300–306 is a binding site for substrate; that stretch reads ATTGRPR. GTP contacts are provided by residues R306, 332-334, and 414-416; these read KLD and SVG.

Belongs to the adenylosuccinate synthetase family. As to quaternary structure, homodimer. Mg(2+) is required as a cofactor.

It localises to the cytoplasm. The enzyme catalyses IMP + L-aspartate + GTP = N(6)-(1,2-dicarboxyethyl)-AMP + GDP + phosphate + 2 H(+). The protein operates within purine metabolism; AMP biosynthesis via de novo pathway; AMP from IMP: step 1/2. Its function is as follows. Plays an important role in the de novo pathway of purine nucleotide biosynthesis. Catalyzes the first committed step in the biosynthesis of AMP from IMP. This is Adenylosuccinate synthetase from Anaeromyxobacter dehalogenans (strain 2CP-C).